The chain runs to 792 residues: Phenylalanine--tRNA ligase beta subunit (792 aa).

Positions 39 to 147 (GEALDLILVA…EDAPIGTPLA (109 aa)) constitute a tRNA-binding domain. In terms of domain architecture, B5 spans 400-475 (PAPASILLRR…RIRGYEHLPT (76 aa)). Mg(2+) is bound by residues aspartate 453, aspartate 459, glutamate 462, and glutamate 463. The FDX-ACB domain maps to 698 to 791 (SRFPFVRRDL…IQQRHDVRIR (94 aa)).

This sequence belongs to the phenylalanyl-tRNA synthetase beta subunit family. Type 1 subfamily. Tetramer of two alpha and two beta subunits. The cofactor is Mg(2+).

It is found in the cytoplasm. The enzyme catalyses tRNA(Phe) + L-phenylalanine + ATP = L-phenylalanyl-tRNA(Phe) + AMP + diphosphate + H(+). The chain is Phenylalanine--tRNA ligase beta subunit from Xylella fastidiosa (strain Temecula1 / ATCC 700964).